The following is a 388-amino-acid chain: Cystathionine gamma-synthase (388 aa).

Positions 1–24 are disordered; sequence MSEDRTGHQGISGPATRAIHAGYR. Lys-208 carries the N6-(pyridoxal phosphate)lysine modification.

This sequence belongs to the trans-sulfuration enzymes family. In terms of assembly, homotetramer. Pyridoxal 5'-phosphate is required as a cofactor.

Its subcellular location is the cytoplasm. It carries out the reaction O-succinyl-L-homoserine + L-cysteine = L,L-cystathionine + succinate + H(+). In terms of biological role, catalyzes the formation of L-cystathionine from O-succinyl-L-homoserine (OSHS) and L-cysteine, via a gamma-replacement reaction. In the absence of thiol, catalyzes gamma-elimination to form 2-oxobutanoate, succinate and ammonia. In Mycobacterium bovis (strain ATCC BAA-935 / AF2122/97), this protein is Cystathionine gamma-synthase (metB).